A 487-amino-acid polypeptide reads, in one-letter code: Cytochrome P450 2C16 (487 aa).

Cys432 lines the heme pocket.

It belongs to the cytochrome P450 family. The cofactor is heme. Expressed constitutively in liver, lung, testes, and kidney.

It localises to the endoplasmic reticulum membrane. The protein localises to the microsome membrane. It carries out the reaction an organic molecule + reduced [NADPH--hemoprotein reductase] + O2 = an alcohol + oxidized [NADPH--hemoprotein reductase] + H2O + H(+). Cytochromes P450 are a group of heme-thiolate monooxygenases. In liver microsomes, this enzyme is involved in an NADPH-dependent electron transport pathway. It oxidizes a variety of structurally unrelated compounds, including steroids, fatty acids, and xenobiotics. The chain is Cytochrome P450 2C16 (CYP2C16) from Oryctolagus cuniculus (Rabbit).